The following is a 205-amino-acid chain: Proteasome subunit beta type-3 (205 aa).

Phosphoserine is present on Ser31. A Glycyl lysine isopeptide (Lys-Gly) (interchain with G-Cter in ubiquitin) cross-link involves residue Lys70.

The protein belongs to the peptidase T1B family. The 26S proteasome consists of a 20S proteasome core and two 19S regulatory subunits. The 20S proteasome core is composed of 28 subunits that are arranged in four stacked rings, resulting in a barrel-shaped structure. The two end rings are each formed by seven alpha subunits, and the two central rings are each formed by seven beta subunits. The catalytic chamber with the active sites is on the inside of the barrel.

The protein localises to the cytoplasm. It localises to the nucleus. Its function is as follows. Non-catalytic component of the proteasome which degrades poly-ubiquitinated proteins in the cytoplasm and in the nucleus. It is essential for the regulated turnover of proteins and for the removal of misfolded proteins. The proteasome is a multicatalytic proteinase complex that is characterized by its ability to cleave peptides with Arg, Phe, Tyr, Leu, and Glu adjacent to the leaving group at neutral or slightly basic pH. It has an ATP-dependent proteolytic activity. This subunit may participate in the trypsin-like activity of the enzyme complex. The polypeptide is Proteasome subunit beta type-3 (PUP3) (Saccharomyces cerevisiae (strain ATCC 204508 / S288c) (Baker's yeast)).